Reading from the N-terminus, the 256-residue chain is MLTLANHTFSSRLLTGTGKFSNATTMKSAVSAAQSNIVTLAMKRVASNNAQDETLKALRELGVTLLPNTSGAKNAQEAVFAAELSYEALGSQWVKLEIHPDQRYLLPDPIETLRAAETLVKKGFNVLPYCGADPVLCKRLEDVGCAAVMPLGAPIGSNQGLQTAPFLKIIVEQASIPVIVDAGIGKPSEAMAVMEMGVDAVLVNTAIATARNPVAMAKAFASAVETGRCAFEAGLGATSNVALASSPLTAFLEPTV.

The active-site Schiff-base intermediate with DXP is the Lys-95. Residues Gly-156, 182–183 (AG), and 204–205 (NT) contribute to the 1-deoxy-D-xylulose 5-phosphate site.

It belongs to the ThiG family. Homotetramer. Forms heterodimers with either ThiH or ThiS.

The protein localises to the cytoplasm. It carries out the reaction [ThiS sulfur-carrier protein]-C-terminal-Gly-aminoethanethioate + 2-iminoacetate + 1-deoxy-D-xylulose 5-phosphate = [ThiS sulfur-carrier protein]-C-terminal Gly-Gly + 2-[(2R,5Z)-2-carboxy-4-methylthiazol-5(2H)-ylidene]ethyl phosphate + 2 H2O + H(+). Its pathway is cofactor biosynthesis; thiamine diphosphate biosynthesis. Catalyzes the rearrangement of 1-deoxy-D-xylulose 5-phosphate (DXP) to produce the thiazole phosphate moiety of thiamine. Sulfur is provided by the thiocarboxylate moiety of the carrier protein ThiS. In vitro, sulfur can be provided by H(2)S. This chain is Thiazole synthase, found in Alteromonas mediterranea (strain DSM 17117 / CIP 110805 / LMG 28347 / Deep ecotype).